We begin with the raw amino-acid sequence, 195 residues long: Interferon tau-1 (195 aa).

An N-terminal signal peptide occupies residues 1–23 (MAFVLSLLMALVLVSYGPGRSLG). Disulfide bonds link Cys-24–Cys-122 and Cys-52–Cys-162. N-linked (GlcNAc...) asparagine glycosylation occurs at Asn-101.

It belongs to the alpha/beta interferon family. IFN-alphaII subfamily. Constitutively and exclusively expressed in the mononuclear cells of the extraembryonic trophectoderm.

The protein resides in the secreted. Its function is as follows. Paracrine hormone primarily responsible for maternal recognition of pregnancy. Interacts with endometrial receptors, probably type I interferon receptors, and blocks estrogen receptor expression, preventing the estrogen-induced increase in oxytocin receptor expression in the endometrium. This results in the suppression of the pulsatile endometrial release of the luteolytic hormone prostaglandin F2-alpha, hindering the regression of the corpus luteum (luteolysis) and therefore a return to ovarian cyclicity. This, and a possible direct effect of IFN-tau on prostaglandin synthesis, leads in turn to continued ovarian progesterone secretion, which stimulates the secretion by the endometrium of the nutrients required for the growth of the conceptus. In summary, displays particularly high antiviral and antiproliferative potency concurrently with particular weak cytotoxicity, high antiluteolytic activity and immunomodulatory properties. In contrast with other IFNs, IFN-tau is not virally inducible. The polypeptide is Interferon tau-1 (IFNT1) (Bos taurus (Bovine)).